We begin with the raw amino-acid sequence, 142 residues long: ATP synthase epsilon chain (142 aa).

It belongs to the ATPase epsilon chain family. F-type ATPases have 2 components, CF(1) - the catalytic core - and CF(0) - the membrane proton channel. CF(1) has five subunits: alpha(3), beta(3), gamma(1), delta(1), epsilon(1). CF(0) has three main subunits: a, b and c.

The protein resides in the cell inner membrane. Functionally, produces ATP from ADP in the presence of a proton gradient across the membrane. The protein is ATP synthase epsilon chain of Histophilus somni (strain 2336) (Haemophilus somnus).